We begin with the raw amino-acid sequence, 609 residues long: Spore coat protein homolog 1 (609 aa).

Positions 1-17 are cleaved as a signal peptide; it reads MKSLLFVVFIFLTTTYA. Asn82, Asn397, and Asn440 each carry an N-linked (GlcNAc...) asparagine glycan. The interval 527–547 is disordered; it reads TVTQVPEAPGTDGTPSESTAW. Ser584 carries GPI-anchor amidated serine lipidation. Positions 585-609 are cleaved as a propeptide — removed in mature form; the sequence is SSSIKRTPCILPLVILASTLFASFF.

It is found in the cell membrane. Functionally, may play a role in cell adhesion. The polypeptide is Spore coat protein homolog 1 (Rhizopus delemar (strain RA 99-880 / ATCC MYA-4621 / FGSC 9543 / NRRL 43880) (Mucormycosis agent)).